The following is a 275-amino-acid chain: Large ribosomal subunit protein uL2 (275 aa).

2 disordered regions span residues 24-47 (IHKG…NHHG) and 227-261 (PVDH…KTRK).

The protein belongs to the universal ribosomal protein uL2 family. In terms of assembly, part of the 50S ribosomal subunit. Forms a bridge to the 30S subunit in the 70S ribosome.

Functionally, one of the primary rRNA binding proteins. Required for association of the 30S and 50S subunits to form the 70S ribosome, for tRNA binding and peptide bond formation. It has been suggested to have peptidyltransferase activity; this is somewhat controversial. Makes several contacts with the 16S rRNA in the 70S ribosome. The chain is Large ribosomal subunit protein uL2 from Xylella fastidiosa (strain M12).